Consider the following 268-residue polypeptide: Undecaprenyl-diphosphatase (268 aa).

Transmembrane regions (helical) follow at residues 47–67 (FAIL…FFKL), 83–103 (FIIG…IAGK), 109–129 (LFDP…LLWV), 144–164 (YPLM…IPGV), 184–204 (AAEF…VYDF), 218–238 (LIAI…KAFL), and 246–266 (FVLF…ALAL).

Belongs to the UppP family.

It is found in the cell inner membrane. It catalyses the reaction di-trans,octa-cis-undecaprenyl diphosphate + H2O = di-trans,octa-cis-undecaprenyl phosphate + phosphate + H(+). Catalyzes the dephosphorylation of undecaprenyl diphosphate (UPP). Confers resistance to bacitracin. This chain is Undecaprenyl-diphosphatase, found in Bradyrhizobium sp. (strain ORS 278).